Reading from the N-terminus, the 393-residue chain is NAD(P)H-quinone oxidoreductase subunit H, chloroplastic (393 aa).

This sequence belongs to the complex I 49 kDa subunit family. NDH is composed of at least 16 different subunits, 5 of which are encoded in the nucleus.

It localises to the plastid. Its subcellular location is the chloroplast thylakoid membrane. The catalysed reaction is a plastoquinone + NADH + (n+1) H(+)(in) = a plastoquinol + NAD(+) + n H(+)(out). The enzyme catalyses a plastoquinone + NADPH + (n+1) H(+)(in) = a plastoquinol + NADP(+) + n H(+)(out). Functionally, NDH shuttles electrons from NAD(P)H:plastoquinone, via FMN and iron-sulfur (Fe-S) centers, to quinones in the photosynthetic chain and possibly in a chloroplast respiratory chain. The immediate electron acceptor for the enzyme in this species is believed to be plastoquinone. Couples the redox reaction to proton translocation, and thus conserves the redox energy in a proton gradient. The protein is NAD(P)H-quinone oxidoreductase subunit H, chloroplastic of Nicotiana tomentosiformis (Tobacco).